We begin with the raw amino-acid sequence, 91 residues long: MANKQDLIAKVAAATELTKKDSAAAVDAVFAAVTEYLSKGEKVQLIGFGNFEVRERAARKGRNPQTGKETKIAASKVPAFKAGKALKDAVK.

It belongs to the bacterial histone-like protein family.

Histone-like DNA-binding protein which is capable of wrapping DNA to stabilize it, and thus to prevent its denaturation under extreme environmental conditions. Also seems to act as a fortuitous virulence factor in delayed sequelae by binding to heparan sulfate-proteoglycans in the extracellular matrix of target organs and acting as a nidus for in situ immune complex formation. The chain is DNA-binding protein HU (hup) from Streptococcus gordonii.